The primary structure comprises 522 residues: Lysophospholipid acyltransferase LPCAT4 (522 aa).

2 helical membrane-spanning segments follow: residues 43-63 and 92-112; these read ILGFTLFPLRFLLAAIFLFLM and HLIYLLSRTMFFMCGFHWITI. The short motif at 130-135 is the HXXXXD motif element; that stretch reads HSTFFD. 2 N-linked (GlcNAc...) asparagine glycosylation sites follow: N166 and N517. The disordered stretch occupies residues 496–522; it reads GRRKPPHIQQNGGCSGKNNPRNQSKMD. The span at 503–522 shows a compositional bias: polar residues; the sequence is IQQNGGCSGKNNPRNQSKMD.

The protein belongs to the 1-acyl-sn-glycerol-3-phosphate acyltransferase family.

The protein resides in the endoplasmic reticulum membrane. It carries out the reaction a 1-acyl-sn-glycero-3-phosphoethanolamine + an acyl-CoA = a 1,2-diacyl-sn-glycero-3-phosphoethanolamine + CoA. It catalyses the reaction a 1-O-(1Z-alkenyl)-sn-glycero-3-phosphoethanolamine + an acyl-CoA = a 1-O-(1Z-alkenyl)-2-acyl-sn-glycero-3-phosphoethanolamine + CoA. The catalysed reaction is a 1-acyl-sn-glycero-3-phosphocholine + an acyl-CoA = a 1,2-diacyl-sn-glycero-3-phosphocholine + CoA. The enzyme catalyses a 1-O-alkyl-sn-glycero-3-phosphocholine + acetyl-CoA = a 1-O-alkyl-2-acetyl-sn-glycero-3-phosphocholine + CoA. It carries out the reaction a 1-acyl-sn-glycero-3-phospho-L-serine + an acyl-CoA = a 1,2-diacyl-sn-glycero-3-phospho-L-serine + CoA. It functions in the pathway lipid metabolism; phospholipid metabolism. Its function is as follows. Displays acyl-CoA-dependent lysophospholipid acyltransferase activity with a subset of lysophospholipids as substrates. Prefers long chain acyl-CoAs (C16, C18) as acyl donors. The sequence is that of Lysophospholipid acyltransferase LPCAT4 (lpcat4) from Xenopus tropicalis (Western clawed frog).